We begin with the raw amino-acid sequence, 252 residues long: Type III pantothenate kinase (252 aa).

Asp-6 to Val-13 serves as a coordination point for ATP. Position 105 to 108 (Gly-105 to Arg-108) interacts with substrate. Catalysis depends on Asp-107, which acts as the Proton acceptor. Asp-127 is a binding site for K(+). Thr-130 lines the ATP pocket. Thr-182 contributes to the substrate binding site.

It belongs to the type III pantothenate kinase family. As to quaternary structure, homodimer. NH4(+) serves as cofactor. The cofactor is K(+).

It is found in the cytoplasm. It carries out the reaction (R)-pantothenate + ATP = (R)-4'-phosphopantothenate + ADP + H(+). The protein operates within cofactor biosynthesis; coenzyme A biosynthesis; CoA from (R)-pantothenate: step 1/5. Its function is as follows. Catalyzes the phosphorylation of pantothenate (Pan), the first step in CoA biosynthesis. The sequence is that of Type III pantothenate kinase from Salinispora arenicola (strain CNS-205).